Consider the following 777-residue polypeptide: Endonuclease MutS2 (777 aa).

ATP is bound at residue 328–335 (GPNTGGKT). In terms of domain architecture, Smr spans 702–777 (LDLRGKRYEE…GSGATIVIFK (76 aa)).

The protein belongs to the DNA mismatch repair MutS family. MutS2 subfamily. In terms of assembly, homodimer. Binds to stalled ribosomes, contacting rRNA.

Endonuclease that is involved in the suppression of homologous recombination and thus may have a key role in the control of bacterial genetic diversity. Its function is as follows. Acts as a ribosome collision sensor, splitting the ribosome into its 2 subunits. Detects stalled/collided 70S ribosomes which it binds and splits by an ATP-hydrolysis driven conformational change. Acts upstream of the ribosome quality control system (RQC), a ribosome-associated complex that mediates the extraction of incompletely synthesized nascent chains from stalled ribosomes and their subsequent degradation. Probably generates substrates for RQC. The sequence is that of Endonuclease MutS2 from Streptococcus gordonii (strain Challis / ATCC 35105 / BCRC 15272 / CH1 / DL1 / V288).